Reading from the N-terminus, the 435-residue chain is MLDSKLLRTELDETAEKLARRGFKLDVETLRTLEEQRKSLQVITEDLQAQRNSRSKSIGQAKAKGDHEEADRIMADVATLGSELDDAKAGLAELQQQIESIALSVPNLPDESVPYGKDEDENVEVLRWGTPLTYDFEVRDHVALGELADGLDFASAVKISGSRFIVMKGQFARLHRALSQFMLDLHTEEHGYMEMYVPYLVNHDSLYGTGQLPKFGEDLFHTSPLTEQVSDVPLKMLSLIPTAEVPVTNMVRDTITEEADLPLKMTAHTPCFRSEAGSYGRDTRGLIRMHQFDKVELVQITKPEDSMAALEELTGHAEKVLQLLELPYRKVILCTGDMGFGSRKTYDLEVWVPAQETYREISSCSNMWDFQARRMQARFRRQGEKKPELVHTLNGSGLAVGRTMVAILENFQQADGKIAIPEVLRKYMNGVEFIG.

242–244 (TAE) provides a ligand contact to L-serine. Residue 273-275 (RSE) participates in ATP binding. Glu296 serves as a coordination point for L-serine. 360 to 363 (EISS) contributes to the ATP binding site. Ser396 contributes to the L-serine binding site.

Belongs to the class-II aminoacyl-tRNA synthetase family. Type-1 seryl-tRNA synthetase subfamily. As to quaternary structure, homodimer. The tRNA molecule binds across the dimer.

The protein localises to the cytoplasm. The enzyme catalyses tRNA(Ser) + L-serine + ATP = L-seryl-tRNA(Ser) + AMP + diphosphate + H(+). It catalyses the reaction tRNA(Sec) + L-serine + ATP = L-seryl-tRNA(Sec) + AMP + diphosphate + H(+). The protein operates within aminoacyl-tRNA biosynthesis; selenocysteinyl-tRNA(Sec) biosynthesis; L-seryl-tRNA(Sec) from L-serine and tRNA(Sec): step 1/1. Functionally, catalyzes the attachment of serine to tRNA(Ser). Is also able to aminoacylate tRNA(Sec) with serine, to form the misacylated tRNA L-seryl-tRNA(Sec), which will be further converted into selenocysteinyl-tRNA(Sec). This is Serine--tRNA ligase from Aliivibrio salmonicida (strain LFI1238) (Vibrio salmonicida (strain LFI1238)).